We begin with the raw amino-acid sequence, 73 residues long: MKADIHPDYHMIKVVMTDGTEYETRSTWGKEGDTLNLDIDPNSHPAWTGGQQTLVDRGGRLSKFKKRYEGLGI.

Belongs to the bacterial ribosomal protein bL31 family. Type A subfamily. As to quaternary structure, part of the 50S ribosomal subunit.

Binds the 23S rRNA. In Chelativorans sp. (strain BNC1), this protein is Large ribosomal subunit protein bL31.